Reading from the N-terminus, the 227-residue chain is DNA repair protein RecO (227 aa).

It belongs to the RecO family.

Functionally, involved in DNA repair and RecF pathway recombination. In Pseudomonas putida (strain GB-1), this protein is DNA repair protein RecO.